The sequence spans 482 residues: Glutamyl-tRNA(Gln) amidotransferase subunit A (482 aa).

Active-site charge relay system residues include lysine 75 and serine 150. The Acyl-ester intermediate role is filled by serine 174.

This sequence belongs to the amidase family. GatA subfamily. As to quaternary structure, heterotrimer of A, B and C subunits.

It carries out the reaction L-glutamyl-tRNA(Gln) + L-glutamine + ATP + H2O = L-glutaminyl-tRNA(Gln) + L-glutamate + ADP + phosphate + H(+). In terms of biological role, allows the formation of correctly charged Gln-tRNA(Gln) through the transamidation of misacylated Glu-tRNA(Gln) in organisms which lack glutaminyl-tRNA synthetase. The reaction takes place in the presence of glutamine and ATP through an activated gamma-phospho-Glu-tRNA(Gln). The protein is Glutamyl-tRNA(Gln) amidotransferase subunit A of Deinococcus radiodurans (strain ATCC 13939 / DSM 20539 / JCM 16871 / CCUG 27074 / LMG 4051 / NBRC 15346 / NCIMB 9279 / VKM B-1422 / R1).